The following is a 281-amino-acid chain: MGLEEKLPGGVLLASVEKLANWSRRSSLWPATFGLACCAIEMMSTGAGRYDLSRFGMEVFRASPRQADLMIVAGRVSQKMAPVLRQIYDQMPEPKWVLSMGVCASSGGMFNNYAIVQGVDHIVPVDMYLPGCPPRPEMLMDAIIKLHEKILAGPVTGRTAHTESGSSPYPKPIDVATARAGLPAGELDTRTLSVNDRKRFRIPAGAPVPTGRGAVEPVLDTRRPAAIAPPSVFGRAKGIPVDAKPLDESRAHGPGPTTADIADAADTADSDAAPGATHDTP.

[4Fe-4S] cluster-binding residues include Cys-37, Cys-38, Cys-103, and Cys-132. The segment at 242–281 is disordered; the sequence is DAKPLDESRAHGPGPTTADIADAADTADSDAAPGATHDTP. The span at 257–281 shows a compositional bias: low complexity; the sequence is TTADIADAADTADSDAAPGATHDTP.

Belongs to the complex I 20 kDa subunit family. NDH-1 is composed of 14 different subunits. Subunits NuoB, C, D, E, F, and G constitute the peripheral sector of the complex. [4Fe-4S] cluster is required as a cofactor.

It is found in the cell membrane. It catalyses the reaction a quinone + NADH + 5 H(+)(in) = a quinol + NAD(+) + 4 H(+)(out). Its function is as follows. NDH-1 shuttles electrons from NADH, via FMN and iron-sulfur (Fe-S) centers, to quinones in the respiratory chain. The immediate electron acceptor for the enzyme in this species is believed to be a menaquinone. Couples the redox reaction to proton translocation (for every two electrons transferred, four hydrogen ions are translocated across the cytoplasmic membrane), and thus conserves the redox energy in a proton gradient. This is NADH-quinone oxidoreductase subunit B from Frankia alni (strain DSM 45986 / CECT 9034 / ACN14a).